The primary structure comprises 229 residues: Ribonuclease 3 (229 aa).

The RNase III domain occupies 5–136 (LAELERALGI…VIGAIYLDQG (132 aa)). Glutamate 49 contributes to the Mg(2+) binding site. Aspartate 53 is an active-site residue. Mg(2+) is bound by residues aspartate 122 and glutamate 125. Glutamate 125 is an active-site residue. Residues 161-229 (DPTTRLQEIV…AQAALADIDR (69 aa)) enclose the DRBM domain.

It belongs to the ribonuclease III family. Homodimer. It depends on Mg(2+) as a cofactor.

The protein resides in the cytoplasm. It catalyses the reaction Endonucleolytic cleavage to 5'-phosphomonoester.. In terms of biological role, digests double-stranded RNA. Involved in the processing of primary rRNA transcript to yield the immediate precursors to the large and small rRNAs (23S and 16S). Processes some mRNAs, and tRNAs when they are encoded in the rRNA operon. Processes pre-crRNA and tracrRNA of type II CRISPR loci if present in the organism. This chain is Ribonuclease 3, found in Chloroflexus aggregans (strain MD-66 / DSM 9485).